The chain runs to 89 residues: Dynein light chain 2, cytoplasmic (89 aa).

The protein belongs to the dynein light chain family. Homodimer. The cytoplasmic dynein 1 complex consists of two catalytic heavy chains (HCs) and a number of non-catalytic subunits which present intermediate chains (ICs), light intermediate chains (LICs) and light chains (LCs); the composition seems to vary in respect to the IC, LIC and LC composition. The heavy chain homodimer serves as a scaffold for the probable homodimeric assembly of the respective non-catalytic subunits. Dynein ICs and LICs bind directly to the HC dimer and the LCs assemble on the IC dimer. Interacts with DYNC1I1. Interacts with BMF. Component of the myosin V motor complex. Interacts with BCAS1. Interacts with Basson/BSN. Interacts with AMBRA1 (via TQT motifs); tethering AMBRA1 to the cytoskeleton. Interacts with IQUB.

It localises to the cytoplasm. Its subcellular location is the cytoskeleton. Acts as one of several non-catalytic accessory components of the cytoplasmic dynein 1 complex that are thought to be involved in linking dynein to cargos and to adapter proteins that regulate dynein function. Cytoplasmic dynein 1 acts as a motor for the intracellular retrograde motility of vesicles and organelles along microtubules. May play a role in changing or maintaining the spatial distribution of cytoskeletal structures. This is Dynein light chain 2, cytoplasmic (DYNLL2) from Homo sapiens (Human).